The primary structure comprises 808 residues: Probable ATP-dependent helicase MJ1401 (808 aa).

Positions 189–217 match the Q motif motif; that stretch reads YKIDELDIPEELKEIIKSRGIEELLPVQT. The Helicase ATP-binding domain occupies 221–391; that stretch reads KAGLLNGDDL…QLNAKLVLYN (171 aa). 234–241 is a binding site for ATP; the sequence is SATSSGKT. The short motif at 336-339 is the DEIH box element; the sequence is DEIH. The 190-residue stretch at 396-585 folds into the Helicase C-terminal domain; the sequence is PLERHIIFCK…EDEEEEQILA (190 aa).

This sequence belongs to the DEAD box helicase family.

The sequence is that of Probable ATP-dependent helicase MJ1401 from Methanocaldococcus jannaschii (strain ATCC 43067 / DSM 2661 / JAL-1 / JCM 10045 / NBRC 100440) (Methanococcus jannaschii).